Reading from the N-terminus, the 233-residue chain is Pyridoxal 5'-phosphate synthase subunit PdxT (233 aa).

Gly-61–Ser-63 contacts L-glutamine. The active-site Nucleophile is Cys-93. L-glutamine is bound by residues Arg-127 and Ile-163–Arg-164. Catalysis depends on charge relay system residues His-212 and Glu-214.

The protein belongs to the glutaminase PdxT/SNO family. In terms of assembly, in the presence of PdxS, forms a dodecamer of heterodimers. Only shows activity in the heterodimer.

The catalysed reaction is aldehydo-D-ribose 5-phosphate + D-glyceraldehyde 3-phosphate + L-glutamine = pyridoxal 5'-phosphate + L-glutamate + phosphate + 3 H2O + H(+). It catalyses the reaction L-glutamine + H2O = L-glutamate + NH4(+). Its pathway is cofactor biosynthesis; pyridoxal 5'-phosphate biosynthesis. Its function is as follows. Catalyzes the hydrolysis of glutamine to glutamate and ammonia as part of the biosynthesis of pyridoxal 5'-phosphate. The resulting ammonia molecule is channeled to the active site of PdxS. The polypeptide is Pyridoxal 5'-phosphate synthase subunit PdxT (Paenarthrobacter aurescens (strain TC1)).